A 65-amino-acid polypeptide reads, in one-letter code: U11-theraphotoxin-Cg1b (65 aa).

A signal peptide spans 1–21; the sequence is MKTTILVVILGLTLLFALSAA. A propeptide spanning residues 22–29 is cleaved from the precursor; the sequence is TELKDEER. Disulfide bonds link Cys31–Cys45, Cys38–Cys50, and Cys44–Cys57.

It belongs to the neurotoxin 10 (Hwtx-1) family. 32 (Jztx-16) subfamily. As to expression, expressed by the venom gland.

The protein localises to the secreted. In terms of biological role, probable ion channel inhibitor. The protein is U11-theraphotoxin-Cg1b of Chilobrachys guangxiensis (Chinese earth tiger tarantula).